The following is a 288-amino-acid chain: MSQFSFTKMHGLGNSYIYVNMFEEQIPEEDLALVAEKVSNINTGIGADGMILICPSDVAPVKMRMFNNDGSEGKSCGNGLRCVAKYAYEHKLVEETVFTIETLAGIVTAEVTVEDGVVTLAKIDMGAPRLTRAEIPMLGESETPFIRENFLYNNHRYAFTAVSMGNPHAVIFVDDVEKAPLTTLGPVLETHEMFPERVNVEFIEILNEDEMNFRVWERGSGVTQACGTGACAAVVAAILNGKMERGKEITVHLAGGDLMIAWTEEGNVLMKGPAEVICRGVYEYKIEA.

Residues asparagine 14 and asparagine 67 each coordinate substrate. Cysteine 76 functions as the Proton donor in the catalytic mechanism. Substrate is bound by residues 77–78 (GN), asparagine 166, asparagine 199, and 217–218 (ER). Catalysis depends on cysteine 226, which acts as the Proton acceptor. 227-228 (GT) is a substrate binding site.

The protein belongs to the diaminopimelate epimerase family. In terms of assembly, homodimer.

The protein resides in the cytoplasm. The catalysed reaction is (2S,6S)-2,6-diaminopimelate = meso-2,6-diaminopimelate. Its pathway is amino-acid biosynthesis; L-lysine biosynthesis via DAP pathway; DL-2,6-diaminopimelate from LL-2,6-diaminopimelate: step 1/1. Functionally, catalyzes the stereoinversion of LL-2,6-diaminopimelate (L,L-DAP) to meso-diaminopimelate (meso-DAP), a precursor of L-lysine and an essential component of the bacterial peptidoglycan. In Bacillus cereus (strain ATCC 14579 / DSM 31 / CCUG 7414 / JCM 2152 / NBRC 15305 / NCIMB 9373 / NCTC 2599 / NRRL B-3711), this protein is Diaminopimelate epimerase.